We begin with the raw amino-acid sequence, 230 residues long: Tol-Pal system protein TolQ (230 aa).

A run of 3 helical transmembrane segments spans residues 16–36 (LVKL…AIII), 139–159 (YIGL…LGAV), and 171–191 (IAEA…AVMA).

Belongs to the ExbB/TolQ family. In terms of assembly, the Tol-Pal system is composed of five core proteins: the inner membrane proteins TolA, TolQ and TolR, the periplasmic protein TolB and the outer membrane protein Pal. They form a network linking the inner and outer membranes and the peptidoglycan layer.

The protein resides in the cell inner membrane. Part of the Tol-Pal system, which plays a role in outer membrane invagination during cell division and is important for maintaining outer membrane integrity. Required, with TolR, for the proton motive force-dependent activation of TolA and for TolA-Pal interaction. This chain is Tol-Pal system protein TolQ, found in Escherichia coli O157:H7.